The following is a 330-amino-acid chain: Aspartate--ammonia ligase (330 aa).

Belongs to the class-II aminoacyl-tRNA synthetase family. AsnA subfamily.

The protein localises to the cytoplasm. It carries out the reaction L-aspartate + NH4(+) + ATP = L-asparagine + AMP + diphosphate + H(+). It functions in the pathway amino-acid biosynthesis; L-asparagine biosynthesis; L-asparagine from L-aspartate (ammonia route): step 1/1. The polypeptide is Aspartate--ammonia ligase (Treponema pallidum (strain Nichols)).